Reading from the N-terminus, the 266-residue chain is Interleukin-1 beta (266 aa).

Residues 1–113 (MATVPEPTNE…ETYDDDLLCD (113 aa)) constitute a propeptide that is removed on maturation.

It belongs to the IL-1 family. Monomer. In its precursor form, weakly interacts with full-length MEFV; the mature cytokine does not interact at all. Interacts with integrins ITGAV:ITGBV and ITGA5:ITGB1; integrin-binding is required for IL1B signaling. Interacts with cargo receptor TMED10; the interaction is direct and is required for the secretion of IL1B mature form. Interacts with HSP90AB1; the interaction facilitates cargo translocation into the ERGIC. Interacts with HSP90B1; the interaction facilitates cargo translocation into the ERGIC.

Its subcellular location is the cytoplasm. It is found in the cytosol. It localises to the secreted. The protein resides in the lysosome. The protein localises to the extracellular exosome. Potent pro-inflammatory cytokine. Initially discovered as the major endogenous pyrogen, induces prostaglandin synthesis, neutrophil influx and activation, T-cell activation and cytokine production, B-cell activation and antibody production, and fibroblast proliferation and collagen production. Promotes Th17 differentiation of T-cells. Synergizes with IL12/interleukin-12 to induce IFNG synthesis from T-helper 1 (Th1) cells. Plays a role in angiogenesis by inducing VEGF production synergistically with TNF and IL6. Involved in transduction of inflammation downstream of pyroptosis: its mature form is specifically released in the extracellular milieu by passing through the gasdermin-D (GSDMD) pore. The protein is Interleukin-1 beta (IL1B) of Delphinapterus leucas (Beluga whale).